Reading from the N-terminus, the 259-residue chain is 3-methyl-2-oxobutanoate hydroxymethyltransferase (259 aa).

2 residues coordinate Mg(2+): Asp-44 and Asp-83. 3-methyl-2-oxobutanoate-binding positions include 44-45 (DS), Asp-83, and Lys-113. Glu-115 contributes to the Mg(2+) binding site. Glu-183 acts as the Proton acceptor in catalysis.

Belongs to the PanB family. In terms of assembly, homodecamer; pentamer of dimers. Mg(2+) serves as cofactor.

It is found in the cytoplasm. The catalysed reaction is 3-methyl-2-oxobutanoate + (6R)-5,10-methylene-5,6,7,8-tetrahydrofolate + H2O = 2-dehydropantoate + (6S)-5,6,7,8-tetrahydrofolate. It functions in the pathway cofactor biosynthesis; (R)-pantothenate biosynthesis; (R)-pantoate from 3-methyl-2-oxobutanoate: step 1/2. Functionally, catalyzes the reversible reaction in which hydroxymethyl group from 5,10-methylenetetrahydrofolate is transferred onto alpha-ketoisovalerate to form ketopantoate. The polypeptide is 3-methyl-2-oxobutanoate hydroxymethyltransferase (Acaryochloris marina (strain MBIC 11017)).